The following is a 1171-amino-acid chain: MSLRFVIGRAGSGKSTLCLREVQEELKQRPRGKTILYLVPEQMTFQTQQALIGSEDVRGSIRAQVFSFSRLAWKVLQEVGGASRLHIDEAGVHMLLRKIVESRKDGLSVFQKAAEQNGFFEHLGSMIAEFKRYNVTPSNVYEMWQQLDAHSSSAEQKLLANKVYDLQLLYDDFERALIGKYLDSEDYLQLLVEKLPQSEYVNGAEIYIDGFHSFSPQELEIVRQLMICGARVTITLTIDEKTLAQPVNELDLFYETTLTYEKIKQVAREEKIEIEKTIPLMEQPRFHSPALAHLEAHYEARPNEKFNGEASVTISTAANLRAEVEGVAREIRKLVADEKYRYRDIAVLLRNGESYYDVMRTLFTDYNIPHFIDEKRPMSHHPLVECIRSALEIISGNWRYDAVFRCVKTELLYPLDVRKEAMREEMDEFENYCLAYGVQGKRWTAEDPWMYRRYRSLDDTNGMITDSEREMEEKINRLRDVVRTPVIRMQKRLKRAGTVMQMCEAVYLFLEELDVPKKLEELRIRAEESGDFLFATDHEQVWEEVMSLLDTFVEMLGEEKMSLSMFTDVMSTGLEALQFANIPPSLDQVLIANIDHSRLSDVRATFIIGVNEGVIPVAPMDEGMLSDEEREVLGAAGIELAPTTRQTLLEEQFVMYQMVTRASEKLYISCPLADEEGKTLLASSFIKKIKRMFPNVKDSFISNDVNDLSRSEQISYVATPEVTLSYVMQHLLTWKRYGFEGNLDFWWDVYNFYVTSDEWKQKSSRVLSSLFYRNRAKKLSTAVSRDLYGDIIKGSVSRMELFNRCAYAHFAQHGLSLRERDIFKLDAPDIGELFHAALKKIADKLLRENRTWADLSIKECEHLSVLVIEEIAPLLQRQILLSSNRHFYLKQKLQQIIFRTSIILREHAKSSGFVPVDLEVPFGMGGTGSLPPMEFSLPNGVKMEVVGRIDRVDKAEDENGTFLRIIDYKSSSKALDLTEVYYGLALQMLTYLDVVTSNAQTWMKKGHAASPAGVLYFHIHNPIVEMKGDATEAEIEKEILKKFKMKGLVLGDADVVRLMDNKLSTGSSDIISAGLKKDGSFSARSSIASEQEFNVLQKYVHHTFENIGKDITEGVIDIAPYKMGNKAACTFCNFKSVCQFDESLEDNQFRSLKDMKDSEAMEKIREEVGGE.

In terms of domain architecture, UvrD-like helicase ATP-binding spans Met1–Ala390. An ATP-binding site is contributed by Gly8–Ser15. The UvrD-like helicase C-terminal domain occupies Met281–Asp587. Cys805, Cys1129, Cys1132, and Cys1138 together coordinate [4Fe-4S] cluster.

The protein belongs to the helicase family. AddB/RexB type 1 subfamily. In terms of assembly, heterodimer of AddA and AddB. Mg(2+) serves as cofactor. It depends on [4Fe-4S] cluster as a cofactor.

The heterodimer acts as both an ATP-dependent DNA helicase and an ATP-dependent, dual-direction single-stranded exonuclease. Recognizes the chi site generating a DNA molecule suitable for the initiation of homologous recombination. The AddB subunit has 5' -&gt; 3' nuclease activity but not helicase activity. The polypeptide is ATP-dependent helicase/deoxyribonuclease subunit B (Bacillus cereus (strain ATCC 14579 / DSM 31 / CCUG 7414 / JCM 2152 / NBRC 15305 / NCIMB 9373 / NCTC 2599 / NRRL B-3711)).